The sequence spans 316 residues: 4-hydroxy-3-methylbut-2-enyl diphosphate reductase (316 aa).

Cys12 contacts [4Fe-4S] cluster. 2 residues coordinate (2E)-4-hydroxy-3-methylbut-2-enyl diphosphate: His41 and His74. Positions 41 and 74 each coordinate dimethylallyl diphosphate. The isopentenyl diphosphate site is built by His41 and His74. [4Fe-4S] cluster is bound at residue Cys96. His124 contacts (2E)-4-hydroxy-3-methylbut-2-enyl diphosphate. Residue His124 coordinates dimethylallyl diphosphate. Position 124 (His124) interacts with isopentenyl diphosphate. Catalysis depends on Glu126, which acts as the Proton donor. Position 167 (Thr167) interacts with (2E)-4-hydroxy-3-methylbut-2-enyl diphosphate. Residue Cys197 participates in [4Fe-4S] cluster binding. 4 residues coordinate (2E)-4-hydroxy-3-methylbut-2-enyl diphosphate: Ser225, Ser226, Asn227, and Ser269. Positions 225, 226, 227, and 269 each coordinate dimethylallyl diphosphate. Positions 225, 226, 227, and 269 each coordinate isopentenyl diphosphate.

The protein belongs to the IspH family. Homodimer. [4Fe-4S] cluster is required as a cofactor.

The enzyme catalyses isopentenyl diphosphate + 2 oxidized [2Fe-2S]-[ferredoxin] + H2O = (2E)-4-hydroxy-3-methylbut-2-enyl diphosphate + 2 reduced [2Fe-2S]-[ferredoxin] + 2 H(+). The catalysed reaction is dimethylallyl diphosphate + 2 oxidized [2Fe-2S]-[ferredoxin] + H2O = (2E)-4-hydroxy-3-methylbut-2-enyl diphosphate + 2 reduced [2Fe-2S]-[ferredoxin] + 2 H(+). It functions in the pathway isoprenoid biosynthesis; dimethylallyl diphosphate biosynthesis; dimethylallyl diphosphate from (2E)-4-hydroxy-3-methylbutenyl diphosphate: step 1/1. Its pathway is isoprenoid biosynthesis; isopentenyl diphosphate biosynthesis via DXP pathway; isopentenyl diphosphate from 1-deoxy-D-xylulose 5-phosphate: step 6/6. Catalyzes the conversion of 1-hydroxy-2-methyl-2-(E)-butenyl 4-diphosphate (HMBPP) into a mixture of isopentenyl diphosphate (IPP) and dimethylallyl diphosphate (DMAPP). Acts in the terminal step of the DOXP/MEP pathway for isoprenoid precursor biosynthesis. The polypeptide is 4-hydroxy-3-methylbut-2-enyl diphosphate reductase (Escherichia coli (strain ATCC 8739 / DSM 1576 / NBRC 3972 / NCIMB 8545 / WDCM 00012 / Crooks)).